A 143-amino-acid chain; its full sequence is Sirohydrochlorin cobaltochelatase (143 aa).

The Proton acceptor role is filled by His9. Residue His9 coordinates Co(2+). His9 is a binding site for Ni(2+). Substrate-binding positions include Glu45 and Leu70–His75. His75 contacts Co(2+). His75 serves as a coordination point for Ni(2+).

Belongs to the CbiX family. CbiXS subfamily. In terms of assembly, homotetramer; dimer of dimers.

The catalysed reaction is Co-sirohydrochlorin + 2 H(+) = sirohydrochlorin + Co(2+). It catalyses the reaction Ni-sirohydrochlorin + 2 H(+) = sirohydrochlorin + Ni(2+). The protein operates within cofactor biosynthesis; adenosylcobalamin biosynthesis; cob(II)yrinate a,c-diamide from sirohydrochlorin (anaerobic route): step 1/10. In terms of biological role, catalyzes the insertion of Co(2+) into sirohydrochlorin as part of the anaerobic pathway to cobalamin biosynthesis. Involved in the biosynthesis of the unique nickel-containing tetrapyrrole coenzyme F430, the prosthetic group of methyl-coenzyme M reductase (MCR), which plays a key role in methanogenesis and anaerobic methane oxidation. Catalyzes the insertion of Ni(2+) into sirohydrochlorin to yield Ni-sirohydrochlorin. This chain is Sirohydrochlorin cobaltochelatase, found in Methanocaldococcus jannaschii (strain ATCC 43067 / DSM 2661 / JAL-1 / JCM 10045 / NBRC 100440) (Methanococcus jannaschii).